The primary structure comprises 617 residues: Elongation factor 4 (617 aa).

In terms of domain architecture, tr-type G spans 17 to 198; that stretch reads AIIRNFCIIA…KIVRDLPAPV (182 aa). GTP contacts are provided by residues 29–34 and 145–148; these read DHGKST and NKID.

This sequence belongs to the TRAFAC class translation factor GTPase superfamily. Classic translation factor GTPase family. LepA subfamily.

It localises to the cell membrane. It carries out the reaction GTP + H2O = GDP + phosphate + H(+). In terms of biological role, required for accurate and efficient protein synthesis under certain stress conditions. May act as a fidelity factor of the translation reaction, by catalyzing a one-codon backward translocation of tRNAs on improperly translocated ribosomes. Back-translocation proceeds from a post-translocation (POST) complex to a pre-translocation (PRE) complex, thus giving elongation factor G a second chance to translocate the tRNAs correctly. Binds to ribosomes in a GTP-dependent manner. This Paenarthrobacter aurescens (strain TC1) protein is Elongation factor 4.